The primary structure comprises 260 residues: Proansamycin X synthase (260 aa).

The Acyl-thioester intermediate role is filled by C73. Residues H111 and D126 contribute to the active site.

The protein belongs to the arylamine N-acetyltransferase family.

The protein operates within antibiotic biosynthesis; rifamycin B biosynthesis. In terms of biological role, catalyzes the release of the completed linear polyketide from the rif PKS by forming an intramolecular amide bond, in this way terminating polyketide assembly and forming the macrocyclic compound proansamycin X, an intermediate in the rifamycin B biosynthesis. This Amycolatopsis mediterranei (strain S699) (Nocardia mediterranei) protein is Proansamycin X synthase (rifF).